The primary structure comprises 625 residues: Chaperone protein HtpG (625 aa).

Positions 1–341 (MGKRKFKAES…SEDLSLNISR (341 aa)) are a; substrate-binding. The interval 342–551 (EMLQHDRQLK…DGEISLEMEK (210 aa)) is b. Residues 552–625 (IINAMPDDQQ…FTNDICKVMV (74 aa)) form a c region.

Belongs to the heat shock protein 90 family. Homodimer.

The protein resides in the cytoplasm. Molecular chaperone. Has ATPase activity. The sequence is that of Chaperone protein HtpG from Oceanobacillus iheyensis (strain DSM 14371 / CIP 107618 / JCM 11309 / KCTC 3954 / HTE831).